A 453-amino-acid chain; its full sequence is Putative amino acid/polyamine transporter MPH_07630_2 (453 aa).

Transmembrane regions (helical) follow at residues 2 to 21 (IGFS…VLVV), 30 to 50 (VMIW…YSMA), and 81 to 101 (VCGW…NFIA). An N-linked (GlcNAc...) asparagine glycan is attached at N110. 2 helical membrane-spanning segments follow: residues 121 to 141 (WHAV…SIFL) and 151 to 171 (AILI…LATN). The N-linked (GlcNAc...) asparagine glycan is linked to N186. 2 helical membrane-spanning segments follow: residues 193 to 213 (AYAA…YDAP) and 231 to 251 (IVMS…SLCF). Residue N274 is glycosylated (N-linked (GlcNAc...) asparagine). The next 4 membrane-spanning stretches (helical) occupy residues 277–297 (GSVA…LVCA), 330–350 (LGVP…FNSI), 358–378 (FNTV…IPLL), and 403–423 (GLLA…TFNF). The N-linked (GlcNAc...) asparagine glycan is linked to N435.

Belongs to the amino acid-polyamine-organocation (APC) superfamily.

It localises to the membrane. This Macrophomina phaseolina (strain MS6) (Charcoal rot fungus) protein is Putative amino acid/polyamine transporter MPH_07630_2.